We begin with the raw amino-acid sequence, 1322 residues long: Transcription elongation factor SPT6-like (1322 aa).

Basic and acidic residues predominate over residues 1–17 (MNRIDEEPQIHEDPVEN). Disordered regions lie at residues 1-65 (MNRI…KKDE) and 90-113 (KRLKKSSEEEDKINNDDDDDDLSH). Over residues 18-33 (REEDDEDEDDQYEFDD) the composition is skewed to acidic residues. Residues 48–65 (EQRHCSEKKSRSRRKKDE) show a composition bias toward basic and acidic residues. The segment covering 97–110 (EEEDKINNDDDDDD) has biased composition (acidic residues). An S1 motif domain is found at 1017–1088 (GRIVQATVKK…QRYHVLLVCK (72 aa)).

This sequence belongs to the SPT6 family.

The protein resides in the nucleus. Its function is as follows. Transcription elongation factor that enhances the transcription elongation by RNA polymerase II (RNAPII). The sequence is that of Transcription elongation factor SPT6-like from Arabidopsis thaliana (Mouse-ear cress).